Consider the following 120-residue polypeptide: Nascent polypeptide-associated complex protein (120 aa).

Positions 12–80 (GMNPAKMKQM…VKEVPKSLEI (69 aa)) constitute an NAC-A/B domain.

The protein belongs to the NAC-alpha family. Homodimer. Interacts with the ribosome. Binds ribosomal RNA.

Contacts the emerging nascent chain on the ribosome. The protein is Nascent polypeptide-associated complex protein of Methanosarcina mazei (strain ATCC BAA-159 / DSM 3647 / Goe1 / Go1 / JCM 11833 / OCM 88) (Methanosarcina frisia).